The chain runs to 274 residues: Large ribosomal subunit protein uL2 (274 aa).

The interval Gly223–Lys274 is disordered. Over residues Asp230–Ser240 the composition is skewed to basic and acidic residues. The span at Tyr256–Lys274 shows a compositional bias: basic residues.

It belongs to the universal ribosomal protein uL2 family. As to quaternary structure, part of the 50S ribosomal subunit. Forms a bridge to the 30S subunit in the 70S ribosome.

In terms of biological role, one of the primary rRNA binding proteins. Required for association of the 30S and 50S subunits to form the 70S ribosome, for tRNA binding and peptide bond formation. It has been suggested to have peptidyltransferase activity; this is somewhat controversial. Makes several contacts with the 16S rRNA in the 70S ribosome. In Nautilia profundicola (strain ATCC BAA-1463 / DSM 18972 / AmH), this protein is Large ribosomal subunit protein uL2.